The sequence spans 167 residues: Alanine- and arginine-rich domain-containing protein (167 aa).

Residues 140-167 (LKKRQDQELASKPQSPQDKEMNSECGSA) form a disordered region.

Preferentially expressed in testis both in embryo and adult. Expressed at much lower level in other tissues.

This chain is Alanine- and arginine-rich domain-containing protein (Aard), found in Mus musculus (Mouse).